The primary structure comprises 1445 residues: Protein HUA2-LIKE 1 (1445 aa).

A PWWP domain is found at 20–77 (LGDLVLAKVKGFPAWPAKIGQPEDWNQAPDPKKHFVQFYGTGEIGFVTPPDIQPFTSE). 7 disordered regions span residues 133–197 (KYLN…SPDP), 211–302 (TCTD…DLNI), 319–356 (FENELGKSASGADESKRAAKRPRSEDAKDQKQCKSKRL), 409–439 (EHTSVSSFPGSLVKEGANHPEQKISSSSDSD), 460–491 (DDDDEDPKTPVHGGLSNIPIASTDAPKSANAS), 641–685 (GIPK…TSTP), and 797–835 (LTPSNHGRQSSSSNQAGTEENEERRFSSGHRSVGGSLSG). Composition is skewed to polar residues over residues 173 to 187 (QDSSISNNRNTSPSS) and 211 to 225 (TCTDHSDGTGNNLVN). 3 stretches are compositionally biased toward basic and acidic residues: residues 228 to 257 (RIIRKTTDDSNKRCKDEVRAKRVPDSRAAT), 274 to 293 (GQDHGSKKGQDHGCRKESSD), and 331 to 350 (DESKRAAKRPRSEDAKDQKQ). 2 stretches are compositionally biased toward polar residues: residues 660–673 (RVSSSHSQTANQRS) and 797–814 (LTPSNHGRQSSSSNQAGT). Residues 838–979 (EAAISRDTFE…RYIGDLGASG (142 aa)) enclose the CID domain. The disordered stretch occupies residues 1110-1203 (PATTCATELP…SLPLQPGFAP (94 aa)). The span at 1124–1170 (GSPPLPHESPPSPPPQPPSSPPPPSSPPQLAPAPPPSDHCLPPPTAP) shows a compositional bias: pro residues.

In terms of tissue distribution, expressed throughout young primordia, and vegetative and reproductive apices.

It localises to the nucleus. In terms of biological role, probable transcription factor that acts with partial redundancy with HULK2 and HULK3. Plays diverse and essential roles in the control of plant development, physiology and flowering time. The chain is Protein HUA2-LIKE 1 from Arabidopsis thaliana (Mouse-ear cress).